Consider the following 376-residue polypeptide: Glutamate 5-kinase (376 aa).

An ATP-binding site is contributed by Lys-15. 3 residues coordinate substrate: Ser-56, Asp-143, and Asn-155. An ATP-binding site is contributed by 175–176 (SD). One can recognise a PUA domain in the interval 281–358 (KGTLTIDAGA…PDVMMILGIT (78 aa)).

The protein belongs to the glutamate 5-kinase family.

Its subcellular location is the cytoplasm. The catalysed reaction is L-glutamate + ATP = L-glutamyl 5-phosphate + ADP. Its pathway is amino-acid biosynthesis; L-proline biosynthesis; L-glutamate 5-semialdehyde from L-glutamate: step 1/2. In terms of biological role, catalyzes the transfer of a phosphate group to glutamate to form L-glutamate 5-phosphate. The chain is Glutamate 5-kinase from Rhodopseudomonas palustris (strain ATCC BAA-98 / CGA009).